The following is a 458-amino-acid chain: Cysteine protease ATG4C (458 aa).

N-acetylmethionine is present on methionine 1. Cysteine 111 serves as the catalytic Nucleophile. Residues aspartate 345 and histidine 347 contribute to the active site. Phosphoserine is present on serine 451. Threonine 452 is modified (phosphothreonine).

This sequence belongs to the peptidase C54 family.

It is found in the cytoplasm. The enzyme catalyses [protein]-C-terminal L-amino acid-glycyl-phosphatidylethanolamide + H2O = [protein]-C-terminal L-amino acid-glycine + a 1,2-diacyl-sn-glycero-3-phosphoethanolamine. With respect to regulation, inhibited by N-ethylmaleimide. Its function is as follows. Cysteine protease that plays a key role in autophagy by mediating both proteolytic activation and delipidation of ATG8 family proteins. The protease activity is required for proteolytic activation of ATG8 family proteins: cleaves the C-terminal amino acid of ATG8 proteins MAP1LC3 and GABARAPL2, to reveal a C-terminal glycine. Exposure of the glycine at the C-terminus is essential for ATG8 proteins conjugation to phosphatidylethanolamine (PE) and insertion to membranes, which is necessary for autophagy. In addition to the protease activity, also mediates delipidation of ATG8 family proteins. Catalyzes delipidation of PE-conjugated forms of ATG8 proteins during macroautophagy. Compared to ATG4B, the major protein for proteolytic activation of ATG8 proteins, shows weaker ability to cleave the C-terminal amino acid of ATG8 proteins, while it displays stronger delipidation activity. In contrast to other members of the family, weakly or not involved in phagophore growth during mitophagy. This is Cysteine protease ATG4C from Mus musculus (Mouse).